A 282-amino-acid polypeptide reads, in one-letter code: ATP phosphoribosyltransferase (282 aa).

The protein belongs to the ATP phosphoribosyltransferase family. Long subfamily. It depends on Mg(2+) as a cofactor.

It localises to the cytoplasm. It catalyses the reaction 1-(5-phospho-beta-D-ribosyl)-ATP + diphosphate = 5-phospho-alpha-D-ribose 1-diphosphate + ATP. Its pathway is amino-acid biosynthesis; L-histidine biosynthesis; L-histidine from 5-phospho-alpha-D-ribose 1-diphosphate: step 1/9. Its activity is regulated as follows. Feedback inhibited by histidine. Its function is as follows. Catalyzes the condensation of ATP and 5-phosphoribose 1-diphosphate to form N'-(5'-phosphoribosyl)-ATP (PR-ATP). Has a crucial role in the pathway because the rate of histidine biosynthesis seems to be controlled primarily by regulation of HisG enzymatic activity. This is ATP phosphoribosyltransferase from Pyrobaculum calidifontis (strain DSM 21063 / JCM 11548 / VA1).